Reading from the N-terminus, the 400-residue chain is Putative cytochrome P450 141 (400 aa).

2 consecutive transmembrane segments (helical) span residues 225–245 and 294–314; these read VVGM…AVIT and VVIA…ITSA. Cys-346 is a heme binding site.

Belongs to the cytochrome P450 family. Requires heme as cofactor.

The protein localises to the cell membrane. The chain is Putative cytochrome P450 141 (cyp141) from Mycobacterium tuberculosis (strain CDC 1551 / Oshkosh).